A 655-amino-acid chain; its full sequence is E3 ubiquitin-protein ligase TRIM32 (655 aa).

The RING-type zinc finger occupies C21–S66. S56 carries the post-translational modification Phosphoserine; by CHEK2. Residues V96 to V139 form a B box-type; atypical zinc finger. The Zn(2+) site is built by C101, C104, C124, and H129. The stretch at V139 to E198 forms a coiled coil. The tract at residues M327–S347 is disordered. 3 positions are modified to phosphoserine: S330, S337, and S341. NHL repeat units lie at residues L360–K403, D417–D460, G461–D501, G564–G607, and G608–H648.

Belongs to the TRIM/RBCC family. It self-associates. Interacts with DTNBP1. Interacts with PIAS4/PIASY upon treatment with UVB and TNF-alpha. Interacts with AMBRA1; promoting activation of ULK1 through unanchored 'Lys-63'-linked polyubiquitin chains. Interacts with TICAM1 and TAX1BP1; these interactions target TICAM1 to TAX1BP1-mediated selective autophagic degradation. Post-translationally, ubiquitinated. Phosphorylation at Ser-56 by CHEK2 under oxidative stress, activates the E3 ligase activity and promotes ATG7 ubiquitination leading to positive regulation of the autophagosme assembly. In terms of tissue distribution, ubiquitous. High expression in brain.

The protein resides in the cytoplasm. It catalyses the reaction S-ubiquitinyl-[E2 ubiquitin-conjugating enzyme]-L-cysteine + [acceptor protein]-L-lysine = [E2 ubiquitin-conjugating enzyme]-L-cysteine + N(6)-ubiquitinyl-[acceptor protein]-L-lysine.. Its pathway is protein modification; protein ubiquitination. Functionally, E3 ubiquitin ligase that plays a role in various biological processes including neural stem cell differentiation, innate immunity, inflammatory resonse and autophagy. Plays a role in virus-triggered induction of IFN-beta and TNF-alpha by mediating the ubiquitination of STING1. Mechanistically, targets STING1 for 'Lys-63'-linked ubiquitination which promotes the interaction of STING1 with TBK1. Regulates bacterial clearance and promotes autophagy in Mycobacterium tuberculosis-infected macrophages. Negatively regulates TLR3/4-mediated innate immune and inflammatory response by triggering the autophagic degradation of TICAM1 in an E3 activity-independent manner. Plays an essential role in oxidative stress induced cell death by inducing loss of transmembrane potential and enhancing mitochondrial reactive oxygen species (ROS) production during oxidative stress conditions. Ubiquitinates XIAP and targets it for proteasomal degradation. Ubiquitinates DTNBP1 (dysbindin) and promotes its degradation. May ubiquitinate BBS2. Ubiquitinates PIAS4/PIASY and promotes its degradation in keratinocytes treated with UVB and TNF-alpha. Also acts as a regulator of autophagy by mediating formation of unanchored 'Lys-63'-linked polyubiquitin chains that activate ULK1: interaction with AMBRA1 is required for ULK1 activation. Positively regulates dendritic branching by promoting ubiquitination and subsequent degradation of the epigenetic factor CDYL. Under metabolic stress and phosphorylation by CHK2, mediates 'Lys-63'-linked ubiquitination of ATG7 at 'Lys-41' to initiate autophagy. The sequence is that of E3 ubiquitin-protein ligase TRIM32 from Mus musculus (Mouse).